Consider the following 132-residue polypeptide: Fatty acid-binding protein 12 (132 aa).

Residues arginine 107 and 127-129 (RTY) contribute to the a fatty acid site.

It belongs to the calycin superfamily. Fatty-acid binding protein (FABP) family. As to expression, highly expressed in adult retina and testis with lower levels in cerebral cortex, kidney and epididymis. In the retina, strongly expressed in the ganglion cell layer and throughout the inner nuclear layer in amacrine and bipolar cells. Not expressed in the outer nuclear layer. In the testis, detected in the seminiferous tubules.

Functionally, may play a role in lipid transport. This is Fatty acid-binding protein 12 from Rattus norvegicus (Rat).